The sequence spans 302 residues: tRNA pseudouridine synthase B (302 aa).

Asp45 serves as the catalytic Nucleophile.

Belongs to the pseudouridine synthase TruB family. Type 1 subfamily.

It catalyses the reaction uridine(55) in tRNA = pseudouridine(55) in tRNA. In terms of biological role, responsible for synthesis of pseudouridine from uracil-55 in the psi GC loop of transfer RNAs. This chain is tRNA pseudouridine synthase B, found in Francisella tularensis subsp. holarctica (strain FTNF002-00 / FTA).